A 33-amino-acid polypeptide reads, in one-letter code: Cyanophlyctin-beta (33 aa).

Cysteines 27 and 33 form a disulfide.

In terms of tissue distribution, expressed by the skin glands.

It is found in the secreted. In terms of biological role, antimicrobial peptide active against E.coli (MIC=5 uM), K.pneumoniae (MIC=10 uM), B.cereus (MIC=7 uM) and S.aureus (MIC=12 uM). Has very little hemolytic activity. The protein is Cyanophlyctin-beta of Euphlyctis cyanophlyctis (Skittering frog).